A 150-amino-acid chain; its full sequence is 16 kDa phloem protein 1 (150 aa).

Positions 1–108 constitute a C2 domain; sequence MGMGMMEVHL…LAEGVRKGKS (108 aa). Residues Asp-20, Asp-27, Asp-78, Asp-80, and Asp-86 each coordinate Ca(2+).

Requires Ca(2+) as cofactor. Sieve elements of leaves, stems, roots and flowers.

In terms of biological role, binds to both sense and antisense RNA. Interacts with mesophyll plasmodesmata to mediate its own cell-to-cell transport and potentiate RNA trafficking. This is 16 kDa phloem protein 1 (PP16-1) from Cucurbita maxima (Pumpkin).